Reading from the N-terminus, the 312-residue chain is MTYETDTTLMLVAVGEALVGILGNAFIALVNFMGWMKNRKIASIDLILSSVAMSRICLQCIILLDCIILVQYPDTYNRGKEMRTVDFFWTLTNHLSVWFATCLSIFYLFKIANFFHPLFLWIKWRIDKLILRTLLACVIISLCFSLPVTENLSDDFRRCVKTKERINSTLRCKVNKAGHASVKVNLNLVMLFPFSVSLVSFLLLILSLWRHTRQIQLSVTGYKDPSTTAHVKAMKAVISFLALFVVYCLAFLIATSSYFMPESELAVIWGELIALIYPSSHSFILILGSSKLKQASVRVLCRVKTMLKGKKY.

Over 1–9 the chain is Extracellular; that stretch reads MTYETDTTL. The chain crosses the membrane as a helical span at residues 10-30; sequence MLVAVGEALVGILGNAFIALV. The Cytoplasmic portion of the chain corresponds to 31-49; sequence NFMGWMKNRKIASIDLILS. A helical transmembrane segment spans residues 50–70; it reads SVAMSRICLQCIILLDCIILV. Residues 71-101 lie on the Extracellular side of the membrane; that stretch reads QYPDTYNRGKEMRTVDFFWTLTNHLSVWFAT. A helical membrane pass occupies residues 102–122; that stretch reads CLSIFYLFKIANFFHPLFLWI. Topologically, residues 123–128 are cytoplasmic; that stretch reads KWRIDK. The helical transmembrane segment at 129-149 threads the bilayer; the sequence is LILRTLLACVIISLCFSLPVT. Residues 150–187 lie on the Extracellular side of the membrane; sequence ENLSDDFRRCVKTKERINSTLRCKVNKAGHASVKVNLN. Asn151 and Asn167 each carry an N-linked (GlcNAc...) asparagine glycan. Residues 188-208 traverse the membrane as a helical segment; sequence LVMLFPFSVSLVSFLLLILSL. Residues 209–235 are Cytoplasmic-facing; it reads WRHTRQIQLSVTGYKDPSTTAHVKAMK. The helical transmembrane segment at 236 to 256 threads the bilayer; sequence AVISFLALFVVYCLAFLIATS. Residues 257–266 are Extracellular-facing; it reads SYFMPESELA. A helical membrane pass occupies residues 267–287; sequence VIWGELIALIYPSSHSFILIL. Residues 288–312 are Cytoplasmic-facing; sequence GSSKLKQASVRVLCRVKTMLKGKKY.

The protein belongs to the G-protein coupled receptor T2R family. Expressed in subsets of taste receptor cells of the tongue and palate epithelium and exclusively in gustducin-positive cells. Expressed in 15% taste bud cells in circumvallate and foliate papillae but only in 2% in fungiform papillae. Expressed in gastric and duodenal tissues.

The protein resides in the membrane. Its function is as follows. Gustducin-coupled receptor implicated in the perception of bitter compounds in the oral cavity and the gastrointestinal tract. Signals through PLCB2 and the calcium-regulated cation channel TRPM5. The polypeptide is Taste receptor type 2 member 7 (Tas2r7) (Mus musculus (Mouse)).